The sequence spans 390 residues: ATP phosphoribosyltransferase regulatory subunit (390 aa).

It belongs to the class-II aminoacyl-tRNA synthetase family. HisZ subfamily. Heteromultimer composed of HisG and HisZ subunits.

The protein resides in the cytoplasm. It participates in amino-acid biosynthesis; L-histidine biosynthesis; L-histidine from 5-phospho-alpha-D-ribose 1-diphosphate: step 1/9. Required for the first step of histidine biosynthesis. May allow the feedback regulation of ATP phosphoribosyltransferase activity by histidine. This is ATP phosphoribosyltransferase regulatory subunit from Bacillus velezensis (strain DSM 23117 / BGSC 10A6 / LMG 26770 / FZB42) (Bacillus amyloliquefaciens subsp. plantarum).